Consider the following 268-residue polypeptide: Glucosamine-6-phosphate deaminase (268 aa).

The Proton acceptor; for enolization step role is filled by D72. D141 functions as the For ring-opening step in the catalytic mechanism. H143 acts as the Proton acceptor; for ring-opening step in catalysis. E148 serves as the catalytic For ring-opening step.

Belongs to the glucosamine/galactosamine-6-phosphate isomerase family. NagB subfamily. As to quaternary structure, homohexamer.

The catalysed reaction is alpha-D-glucosamine 6-phosphate + H2O = beta-D-fructose 6-phosphate + NH4(+). It functions in the pathway amino-sugar metabolism; N-acetylneuraminate degradation; D-fructose 6-phosphate from N-acetylneuraminate: step 5/5. Allosterically activated by N-acetylglucosamine 6-phosphate (GlcNAc6P). In terms of biological role, catalyzes the reversible isomerization-deamination of glucosamine 6-phosphate (GlcN6P) to form fructose 6-phosphate (Fru6P) and ammonium ion. This Histophilus somni (strain 129Pt) (Haemophilus somnus) protein is Glucosamine-6-phosphate deaminase.